The chain runs to 688 residues: Putative proline--tRNA ligase YHR020W (688 aa).

Residue S149 is modified to Phosphoserine. T170 is modified (phosphothreonine). The disordered stretch occupies residues 631–650; it reads ESSAKKDDGEEFEEDDKAPS. S655 bears the Phosphoserine mark.

The protein belongs to the class-II aminoacyl-tRNA synthetase family.

It carries out the reaction tRNA(Pro) + L-proline + ATP = L-prolyl-tRNA(Pro) + AMP + diphosphate. The sequence is that of Putative proline--tRNA ligase YHR020W from Saccharomyces cerevisiae (strain ATCC 204508 / S288c) (Baker's yeast).